The following is a 622-amino-acid chain: Probable potassium transport system protein Kup (622 aa).

12 helical membrane-spanning segments follow: residues 8–28 (LAVL…TSVL), 50–70 (ILSI…VSLV), 101–121 (VLLL…VITP), 137–157 (PTFT…LFAM), 165–185 (IGKF…LLGV), 213–233 (ITFI…ALYA), 247–267 (WFSV…ALLL), 285–305 (ALIP…QALI), 337–357 (IYMP…VVMF), 366–386 (AYGI…FYVI), 393–413 (PLAL…AFFA), and 419–439 (LFAG…LMIT).

This sequence belongs to the HAK/KUP transporter (TC 2.A.72) family.

The protein localises to the cell inner membrane. It catalyses the reaction K(+)(in) + H(+)(in) = K(+)(out) + H(+)(out). Functionally, transport of potassium into the cell. Likely operates as a K(+):H(+) symporter. In Polaromonas naphthalenivorans (strain CJ2), this protein is Probable potassium transport system protein Kup.